A 151-amino-acid chain; its full sequence is Probable cyclic pyranopterin monophosphate synthase (151 aa).

Residues 66–68 (MCH) and 102–103 (ME) contribute to the substrate site. The active site involves Asp117.

The protein belongs to the MoaC family. In terms of assembly, homohexamer; trimer of dimers.

It catalyses the reaction (8S)-3',8-cyclo-7,8-dihydroguanosine 5'-triphosphate = cyclic pyranopterin phosphate + diphosphate. It functions in the pathway cofactor biosynthesis; molybdopterin biosynthesis. Catalyzes the conversion of (8S)-3',8-cyclo-7,8-dihydroguanosine 5'-triphosphate to cyclic pyranopterin monophosphate (cPMP). The protein is Probable cyclic pyranopterin monophosphate synthase of Sulfurisphaera tokodaii (strain DSM 16993 / JCM 10545 / NBRC 100140 / 7) (Sulfolobus tokodaii).